Reading from the N-terminus, the 237-residue chain is Sugar fermentation stimulation protein homolog (237 aa).

This sequence belongs to the SfsA family.

In Pseudomonas savastanoi pv. phaseolicola (strain 1448A / Race 6) (Pseudomonas syringae pv. phaseolicola (strain 1448A / Race 6)), this protein is Sugar fermentation stimulation protein homolog.